The chain runs to 288 residues: Undecaprenyl-diphosphatase (288 aa).

The next 8 helical transmembrane spans lie at 11–31 (LDLW…FLPI), 49–69 (PGVA…LSYF), 94–114 (AQMG…GLLI), 129–149 (LAAI…AEQL), 159–179 (LRLA…IPGV), 199–219 (AARF…LVEL), 234–254 (VLAI…AWLL), and 265–285 (FVVY…TGTL).

Belongs to the UppP family.

Its subcellular location is the cell inner membrane. The catalysed reaction is di-trans,octa-cis-undecaprenyl diphosphate + H2O = di-trans,octa-cis-undecaprenyl phosphate + phosphate + H(+). Catalyzes the dephosphorylation of undecaprenyl diphosphate (UPP). Confers resistance to bacitracin. The sequence is that of Undecaprenyl-diphosphatase from Synechococcus elongatus (strain ATCC 33912 / PCC 7942 / FACHB-805) (Anacystis nidulans R2).